The primary structure comprises 67 residues: Medusin-S1 (67 aa).

Residues 1 to 22 (MSFLKKSLFLVLFLGFVSLSIC) form the signal peptide. Positions 23 to 48 (EEEKRETEEKENEQEDDREERSEEKR) are excised as a propeptide. A disordered region spans residues 26–47 (KRETEEKENEQEDDREERSEEK). Residues 31–40 (EKENEQEDDR) are compositionally biased toward acidic residues. Leu-66 is modified (leucine amide).

It belongs to the frog skin active peptide (FSAP) family. Medusin subfamily. Expressed by the skin glands.

The protein localises to the secreted. It localises to the target cell membrane. Functionally, antibacterial peptide with moderate activity against the Gram-positive bacteria (S.aureus ATCC 25923, MIC=25 uM), but not against all other bacteria (both Gram-positive and Gram-negative) tested. Does not show activity against fungi, and against Leishmania species. It adopts an alpha-helical structure with very low amphipathicity in membrane environments. The protein is Medusin-S1 of Phyllomedusa sauvagei (Sauvage's leaf frog).